A 740-amino-acid chain; its full sequence is Zinc finger CCCH domain-containing protein 14 (740 aa).

Disordered regions lie at residues 82 to 240, 254 to 314, 390 to 426, and 444 to 469; these read SNKQ…NIKG, VSAG…DDAV, ITPS…DDEE, and SFRD…HHST. Composition is skewed to basic and acidic residues over residues 87-158 and 176-185; these read ETSK…EIQR and EHVRARGEKH. Residues 186-200 show a composition bias toward basic residues; it reads DRHHHKDHRRGRSHE. Positions 204-214 are enriched in polar residues; sequence ITSTIVRQASA. A compositionally biased stretch (polar residues) spans 393 to 409; sequence SRDSTPTDDSPTMQKWN. The span at 414 to 426 shows a compositional bias: acidic residues; the sequence is IGDDSEESEDDEE. 2 consecutive C3H1-type zinc fingers follow at residues 499–522 and 523–543; these read HVKE…MHPT and TNCK…IHPP. Residues 623–661 are disordered; it reads IKKKPAPGAESEKKEEKSDENESKAEEPKAEVAPVQPKP. A compositionally biased stretch (basic and acidic residues) spans 632 to 652; that stretch reads ESEKKEEKSDENESKAEEPKA. 3 C3H1-type zinc fingers span residues 668–691, 674–691, and 693–709; these read LHSM…KHPK, CRYA…KHPK, and CRFG…FYHK.

Belongs to the ZC3H14 family.

Its subcellular location is the nucleus. It is found in the cytoplasm. Its function is as follows. RNA-binding protein involved in the biogenesis of circular RNAs (circRNAs), which are produced by back-splicing circularization of pre-mRNAs. This is Zinc finger CCCH domain-containing protein 14 (sut-2) from Caenorhabditis elegans.